Consider the following 554-residue polypeptide: Terpene synthase 17 (554 aa).

Residues Asp-306, Asp-310, and Glu-458 each coordinate Mg(2+). The DDXXD motif signature appears at 306-310 (DDTYD).

It belongs to the terpene synthase family. Tpsa subfamily. Mg(2+) serves as cofactor. It depends on Mn(2+) as a cofactor.

It catalyses the reaction (2E,6E)-farnesyl diphosphate = (+)-valencene + diphosphate. The enzyme catalyses (2E,6E)-farnesyl diphosphate = (E)-beta-farnesene + diphosphate. It carries out the reaction (2E,6E)-farnesyl diphosphate = gamma-gurjunene + diphosphate. The catalysed reaction is (2Z,6Z)-farnesyl diphosphate = beta-bisabolene + diphosphate. It catalyses the reaction (2Z,6Z)-farnesyl diphosphate = (E)-gamma-bisabolene + diphosphate. The enzyme catalyses (2E)-geranyl diphosphate = limonene + diphosphate. It carries out the reaction (2E)-geranyl diphosphate = beta-myrcene + diphosphate. The catalysed reaction is (2E)-geranyl diphosphate = (E)-beta-ocimene + diphosphate. It catalyses the reaction (2E)-geranyl diphosphate = terpinolene + diphosphate. The enzyme catalyses (2E)-geranyl diphosphate = gamma-terpinene + diphosphate. It carries out the reaction (2Z,6Z)-farnesyl diphosphate = (Z)-gamma-bisabolene + diphosphate. The catalysed reaction is (2E,6E)-farnesyl diphosphate = (1S,5S,6R)-alpha-bergamotene + diphosphate. It catalyses the reaction (2Z,6Z)-farnesyl diphosphate = (1S,5S,6S)-alpha-bergamotene + diphosphate. Its pathway is secondary metabolite biosynthesis; terpenoid biosynthesis. Sesquiterpene synthase involved in the biosynthesis of volatile compounds. Mediates the conversion of (2E,6E)-farnesyl diphosphate (FPP) into gamma-gurjunene, (E)-beta-farnesene and (+)-valencene, and of (2Z,6Z)-farnesyl diphosphate ((ZZ)-FPP) into (E)-alpha-bergamotene and (Z)-gamma-bisabolene as well as beta-bisabolene, (Z)-alpha-bergamotene and (E)-gamma-bisabolene to a lower extent. Can act with a low efficiency as a monoterpene synthase with geranyl diphosphate (GPP) as substrate, thus producing beta-myrcene, (E)-beta-ocimene, limonene, terpinolene, gamma-terpinene and (Z)-beta-ocimene. The sequence is that of Terpene synthase 17 from Solanum habrochaites (Wild tomato).